The chain runs to 431 residues: Serine--tRNA ligase (431 aa).

237–239 is a binding site for L-serine; the sequence is TAE. Position 268 to 270 (268 to 270) interacts with ATP; sequence RSE. Glutamate 291 lines the L-serine pocket. Residue 355–358 coordinates ATP; that stretch reads EISS. Serine 390 contacts L-serine.

Belongs to the class-II aminoacyl-tRNA synthetase family. Type-1 seryl-tRNA synthetase subfamily. In terms of assembly, homodimer. The tRNA molecule binds across the dimer.

It is found in the cytoplasm. The catalysed reaction is tRNA(Ser) + L-serine + ATP = L-seryl-tRNA(Ser) + AMP + diphosphate + H(+). It catalyses the reaction tRNA(Sec) + L-serine + ATP = L-seryl-tRNA(Sec) + AMP + diphosphate + H(+). It functions in the pathway aminoacyl-tRNA biosynthesis; selenocysteinyl-tRNA(Sec) biosynthesis; L-seryl-tRNA(Sec) from L-serine and tRNA(Sec): step 1/1. Its function is as follows. Catalyzes the attachment of serine to tRNA(Ser). Is also able to aminoacylate tRNA(Sec) with serine, to form the misacylated tRNA L-seryl-tRNA(Sec), which will be further converted into selenocysteinyl-tRNA(Sec). This Neisseria meningitidis serogroup C (strain 053442) protein is Serine--tRNA ligase.